The primary structure comprises 968 residues: Leucine--tRNA ligase (968 aa).

Over residues 1–13 the composition is skewed to polar residues; that stretch reads MTETPTGTQSSRE. The interval 1 to 22 is disordered; sequence MTETPTGTQSSRETAADDTPRH. Positions 75–86 match the 'HIGH' region motif; sequence PYPSGEGLHVGH. A 'KMSKS' region motif is present at residues 741–745; sequence KIGKS. K744 contributes to the ATP binding site.

It belongs to the class-I aminoacyl-tRNA synthetase family.

The protein localises to the cytoplasm. The catalysed reaction is tRNA(Leu) + L-leucine + ATP = L-leucyl-tRNA(Leu) + AMP + diphosphate. The protein is Leucine--tRNA ligase of Mycolicibacterium vanbaalenii (strain DSM 7251 / JCM 13017 / BCRC 16820 / KCTC 9966 / NRRL B-24157 / PYR-1) (Mycobacterium vanbaalenii).